Consider the following 435-residue polypeptide: Gamma-glutamyl phosphate reductase (435 aa).

The protein belongs to the gamma-glutamyl phosphate reductase family.

The protein localises to the cytoplasm. It carries out the reaction L-glutamate 5-semialdehyde + phosphate + NADP(+) = L-glutamyl 5-phosphate + NADPH + H(+). The protein operates within amino-acid biosynthesis; L-proline biosynthesis; L-glutamate 5-semialdehyde from L-glutamate: step 2/2. Catalyzes the NADPH-dependent reduction of L-glutamate 5-phosphate into L-glutamate 5-semialdehyde and phosphate. The product spontaneously undergoes cyclization to form 1-pyrroline-5-carboxylate. The polypeptide is Gamma-glutamyl phosphate reductase (Bradyrhizobium diazoefficiens (strain JCM 10833 / BCRC 13528 / IAM 13628 / NBRC 14792 / USDA 110)).